We begin with the raw amino-acid sequence, 459 residues long: Magnesium transporter MRS2-11, chloroplastic (459 aa).

The N-terminal 62 residues, 1-62 (MALTPIPSTF…EALKVLSRSK (62 aa)), are a transit peptide targeting the chloroplast. Residues 76-122 (GDYESLNVSDDDDGSDSNSSDGDNGGGRDDSKKIDSSSSSSSSDSTS) form a disordered region. Residues 101-110 (GGRDDSKKID) are compositionally biased toward basic and acidic residues. The span at 111 to 122 (SSSSSSSSDSTS) shows a compositional bias: low complexity. Transmembrane regions (helical) follow at residues 397–417 (LLLQ…GIFG) and 430–450 (AFWL…FLMY). The Required for magnesium transport activity signature appears at 417-419 (GMN).

The protein belongs to the CorA metal ion transporter (MIT) (TC 1.A.35.5) family. Expressed in the green part of the plant. Preferentially expressed in the spongy mesophyll cells and stomata of young leaves but also detected in cotyledons and at the base of the leaf petioles.

It is found in the plastid. The protein localises to the chloroplast membrane. Its function is as follows. High-affinity magnesium transporter that mediates the influx of magnesium in chloroplast. This is Magnesium transporter MRS2-11, chloroplastic (MRS2-11) from Arabidopsis thaliana (Mouse-ear cress).